Here is a 355-residue protein sequence, read N- to C-terminus: Isopentenyl-diphosphate delta-isomerase (355 aa).

6 to 7 (RK) lines the substrate pocket. FMN is bound by residues 62-64 (AMT), S93, and N122. Q152 is a binding site for substrate. Residue E153 coordinates Mg(2+). FMN contacts are provided by residues K184, T214, 258 to 259 (GG), and 280 to 281 (AG).

This sequence belongs to the IPP isomerase type 2 family. As to quaternary structure, homooctamer. Dimer of tetramers. Requires FMN as cofactor. NADPH serves as cofactor. It depends on Mg(2+) as a cofactor.

The protein localises to the cytoplasm. The catalysed reaction is isopentenyl diphosphate = dimethylallyl diphosphate. Functionally, involved in the biosynthesis of isoprenoids. Catalyzes the 1,3-allylic rearrangement of the homoallylic substrate isopentenyl (IPP) to its allylic isomer, dimethylallyl diphosphate (DMAPP). This Bacillus pumilus (strain SAFR-032) protein is Isopentenyl-diphosphate delta-isomerase.